Consider the following 208-residue polypeptide: Ypt/Rab-type GTPase YPT7 (208 aa).

GTP is bound by residues 17–23 (SGVGKTS), 33–40 (YSQQYKAT), Gly67, and 126–129 (NKID). Residues 37–45 (YKATIGADF) carry the Effector region motif. A Glycyl lysine isopeptide (Lys-Gly) (interchain with G-Cter in ubiquitin) cross-link involves residue Lys147. 158-160 (SAK) contributes to the GTP binding site. 2 S-geranylgeranyl cysteine lipidation sites follow: Cys206 and Cys208. Cysteine methyl ester is present on Cys208.

It belongs to the small GTPase superfamily. Rab family. Interacts with IVY1. Interacts with YIF1, YIP4 and YIP5. Interacts with the HOPS complex. Interacts with the class C-Vps complex. Interacts with VPS35. Interacts with VPS39. Interacts with the GDP dissociation inhibitor GDI1. Interacts with CCZ1.

The protein resides in the late endosome. The protein localises to the vacuole membrane. Rab activation is generally mediated by a guanine exchange factor (GEF), while inactivation through hydrolysis of bound GTP is catalyzed by a GTPase activating protein (GAP). YPT7 is activated by GEFs MON1-CCZ1 complex (MC1) and VAM6/VPS39, and inactivated by GAPs GYP7 and GYP1. Its function is as follows. Ypt/Rab-type GTPases are key regulators of membrane trafficking and intracellular vesicular transport. They act as molecular switches that convert between GTP-bound and GDP-bound states, and regulate virtually all steps of membrane traffic from the formation of the transport vesicle at the donor membrane to its fusion at the target membrane. In the GDP-bound state, Ypt proteins are predominantly cytosolic, solubilized through the interaction with a GDP dissociation inhibitor (GDI). In the GTP-bound state, the proteins are membrane bound and interact with specific effector proteins that select cargo, promote vesicle movement, or verify the correct site of fusion. Involved in regulation of vesicular protein transport in exo- and endocytosis. Involved in regulation of late endosome to vacuole trafficking and homotypic vacuole fusion, by interacting in its GTP-bound state on the donor membrane with the large multiprotein HOPS/class C-Vps tethering complex on the acceptor membrane. Involved in retromer assembly and cargo export, recognizing the cargo selection complex (CSC). GTP-bound YPT7 recruits CSC to vacuolar membranes via retromer subunit VPS35. Interacts with the HOPS complex subunit VPS39 independent of the HOPS complex at mitochondria-vacuole contact sites (vCLAMPs), providing a physical and metabolic interconnection between the endocytic pathway and mitochondria. This chain is Ypt/Rab-type GTPase YPT7 (YPT7), found in Saccharomyces cerevisiae (strain ATCC 204508 / S288c) (Baker's yeast).